The sequence spans 421 residues: ATP-dependent RNA helicase RhlB (421 aa).

The Q motif motif lies at 9–37 (QKFSDFALHPKVVEALEKKGFHNCTPIQA). Residues 40–219 (LPLTLAGRDV…FEQMNNAEYI (180 aa)) form the Helicase ATP-binding domain. 53 to 60 (AQTGTGKT) is a binding site for ATP. The DEAD box signature appears at 165 to 168 (DEAD). Residues 245–390 (RLLQTLIEEE…VSKYNPDALM (146 aa)) enclose the Helicase C-terminal domain. The disordered stretch occupies residues 392 to 421 (DLPKPLRLTRPRTGNGPRRTGAPRNRRRSG). Residues 402-414 (PRTGNGPRRTGAP) show a composition bias toward low complexity.

This sequence belongs to the DEAD box helicase family. RhlB subfamily. As to quaternary structure, component of the RNA degradosome, which is a multiprotein complex involved in RNA processing and mRNA degradation.

The protein resides in the cytoplasm. The catalysed reaction is ATP + H2O = ADP + phosphate + H(+). Its function is as follows. DEAD-box RNA helicase involved in RNA degradation. Has RNA-dependent ATPase activity and unwinds double-stranded RNA. This chain is ATP-dependent RNA helicase RhlB, found in Escherichia coli (strain SMS-3-5 / SECEC).